A 379-amino-acid chain; its full sequence is Cytochrome b (379 aa).

4 helical membrane passes run 33–53 (FGSL…FLDM), 77–98 (WLIR…YLHI), 113–133 (WNIG…GYVL), and 178–198 (FFAF…VHLL). The heme b site is built by His-83 and His-97. Heme b contacts are provided by His-182 and His-196. His-201 provides a ligand contact to a ubiquinone. The next 4 helical transmembrane spans lie at 226–246 (TKDF…VPFF), 288–308 (LGGV…PHIQ), 320–340 (ISQF…WIGG), and 347–367 (FIII…VLMP).

It belongs to the cytochrome b family. In terms of assembly, the cytochrome bc1 complex contains 11 subunits: 3 respiratory subunits (MT-CYB, CYC1 and UQCRFS1), 2 core proteins (UQCRC1 and UQCRC2) and 6 low-molecular weight proteins (UQCRH/QCR6, UQCRB/QCR7, UQCRQ/QCR8, UQCR10/QCR9, UQCR11/QCR10 and a cleavage product of UQCRFS1). This cytochrome bc1 complex then forms a dimer. Heme b is required as a cofactor.

The protein localises to the mitochondrion inner membrane. In terms of biological role, component of the ubiquinol-cytochrome c reductase complex (complex III or cytochrome b-c1 complex) that is part of the mitochondrial respiratory chain. The b-c1 complex mediates electron transfer from ubiquinol to cytochrome c. Contributes to the generation of a proton gradient across the mitochondrial membrane that is then used for ATP synthesis. This chain is Cytochrome b (MT-CYB), found in Dipodomys nelsoni (Nelson's kangaroo rat).